Here is a 99-residue protein sequence, read N- to C-terminus: NADH-quinone oxidoreductase subunit K (99 aa).

A run of 3 helical transmembrane segments spans residues 3-23, 28-48, and 59-79; these read VTAY…GVLI, IVVF…LVAF, and IAAF…LAII.

This sequence belongs to the complex I subunit 4L family. As to quaternary structure, NDH-1 is composed of 14 different subunits. Subunits NuoA, H, J, K, L, M, N constitute the membrane sector of the complex.

It is found in the cell membrane. It catalyses the reaction a quinone + NADH + 5 H(+)(in) = a quinol + NAD(+) + 4 H(+)(out). In terms of biological role, NDH-1 shuttles electrons from NADH, via FMN and iron-sulfur (Fe-S) centers, to quinones in the respiratory chain. The immediate electron acceptor for the enzyme in this species is believed to be a menaquinone. Couples the redox reaction to proton translocation (for every two electrons transferred, four hydrogen ions are translocated across the cytoplasmic membrane), and thus conserves the redox energy in a proton gradient. The chain is NADH-quinone oxidoreductase subunit K from Nocardioides sp. (strain ATCC BAA-499 / JS614).